A 210-amino-acid polypeptide reads, in one-letter code: Thymidylate kinase (210 aa).

ATP is bound at residue 11-18 (GVDGSGKS).

It belongs to the thymidylate kinase family.

The enzyme catalyses dTMP + ATP = dTDP + ADP. Phosphorylation of dTMP to form dTDP in both de novo and salvage pathways of dTTP synthesis. The chain is Thymidylate kinase from Mycoplasmoides gallisepticum (strain R(low / passage 15 / clone 2)) (Mycoplasma gallisepticum).